The primary structure comprises 337 residues: Casein kinase I isoform alpha (337 aa).

The Protein kinase domain maps to 20–288 (YRVIRKIGSG…YLRQLFRILF (269 aa)). ATP contacts are provided by residues 26–34 (IGSGSFGDI) and Lys-49. Residue Asp-139 is the Proton acceptor of the active site.

The protein belongs to the protein kinase superfamily. CK1 Ser/Thr protein kinase family. Casein kinase I subfamily. Interacts with cos. Mg(2+) serves as cofactor. Phosphorylated. The dephosphorylated kinase is active in the cytoplasm while the active kinase in the nucleus is phosphorylated.

It is found in the cytoplasm. The protein localises to the nucleus. It carries out the reaction L-seryl-[protein] + ATP = O-phospho-L-seryl-[protein] + ADP + H(+). The enzyme catalyses L-threonyl-[protein] + ATP = O-phospho-L-threonyl-[protein] + ADP + H(+). Its activity is regulated as follows. Activity increases following DNA damage. Its function is as follows. Casein kinases are operationally defined by their preferential utilization of acidic proteins such as caseins as substrates. Can phosphorylate a large number of proteins. Negative regulator of wg signaling. Phosphorylates arm directly or indirectly and stimulates its degradation which prevents inappropriate wg signaling. Phosphorylates smo which promotes its accumulation at the cell surface and its signaling activity in response to hh. Together with dco, regulates proteolytic processing of ci by phosphorylating it, which promotes its binding to slmb, the F-box recognition component of the SCF(slmb) E3 ubiquitin-protein ligase required for ci processing. Inhibits condensin II interphase activity by promoting degradation of the Cap-H2 regulatory subunit and limiting the levels of chromatin-bound Cap-H2 which regulates interphase chromosome organization. In Drosophila melanogaster (Fruit fly), this protein is Casein kinase I isoform alpha (CkIalpha).